The chain runs to 161 residues: Nucleotide-binding protein Ssed_3443 (161 aa).

Belongs to the YajQ family.

Nucleotide-binding protein. In Shewanella sediminis (strain HAW-EB3), this protein is Nucleotide-binding protein Ssed_3443.